Here is a 134-residue protein sequence, read N- to C-terminus: Large ribosomal subunit protein uL16c (134 aa).

This sequence belongs to the universal ribosomal protein uL16 family. As to quaternary structure, part of the 50S ribosomal subunit.

The protein resides in the plastid. The protein localises to the chloroplast. This is Large ribosomal subunit protein uL16c from Oltmannsiellopsis viridis (Marine flagellate).